A 392-amino-acid chain; its full sequence is Fasciculation and elongation protein zeta-1 (392 aa).

Residues Met-1–His-37 form a disordered region. Ser-58 carries the phosphoserine modification. The segment at Met-175 to Ser-198 is disordered. A compositionally biased stretch (acidic residues) spans Asp-180 to Gly-194. Positions Ser-230–Ser-298 form a coiled coil. Phosphoserine is present on residues Ser-298 and Ser-316.

This sequence belongs to the zygin family. As to quaternary structure, homodimer; disulfide-linked. May form heterodimers with FEZ2. Interacts with the NH2-terminal variable region (V1) of PKC zeta and weakly with that of PKC epsilon. Interacts with UBE4B. Interacts with SAP30L. Interacts with SCOC and ULK1; SCOC interferes with ULK1-binding to FEZ1. Directly interacts with SCOC and UVRAG. Stabilizes the interaction between SCOC and UVRAG during amino acid starvation. In terms of processing, phosphorylated by protein kinase C zeta; which enhances interaction with UBE4B and polyubiquitination. Polyubiquitinated in a UBE4B-dependent manner; which does not lead to proteasomal degradation and may be important for neurogenic activity. Polyubiquitin linkage seems to be mainly through Lys-26. As to expression, mainly expressed in brain.

It localises to the cytoplasm. It is found in the cytoskeleton. The protein resides in the microtubule organizing center. Its subcellular location is the centrosome. The protein localises to the cell membrane. Functionally, may be involved in axonal outgrowth as component of the network of molecules that regulate cellular morphology and axon guidance machinery. Able to restore partial locomotion and axonal fasciculation to C.elegans unc-76 mutants in germline transformation experiments. May participate in the transport of mitochondria and other cargos along microtubules. The sequence is that of Fasciculation and elongation protein zeta-1 (FEZ1) from Homo sapiens (Human).